We begin with the raw amino-acid sequence, 1044 residues long: Protein ITPRID1 (1044 aa).

Positions 1-14 are enriched in polar residues; that stretch reads MMAQKSQGSDNLQE. Disordered stretches follow at residues 1–20, 230–251, 388–489, and 583–607; these read MMAQ…EKSK, EEKA…EHRR, MEEV…SSQE, and PEGA…HTQD. Acidic residues predominate over residues 388 to 398; sequence MEEVQSFEEET. Composition is skewed to polar residues over residues 460–469 and 480–489; these read HSLVSSQDCQ and RASMSFSSQE. Residues 896 to 937 adopt a coiled-coil conformation; it reads SRDMSEEEREEAEQLQTLREALRQQVAELEFQLGDRAQQIRE.

In Homo sapiens (Human), this protein is Protein ITPRID1.